Reading from the N-terminus, the 857-residue chain is Mitogen-activated protein kinase kinase kinase dlk-1 (857 aa).

In terms of domain architecture, Protein kinase spans 62–304; the sequence is ISNLEWLGSG…FSHIRQHWEI (243 aa). ATP contacts are provided by residues 68–76 and Lys89; that span reads LGSGSQGAV. The active-site Proton acceptor is Asp173. Disordered stretches follow at residues 441–503, 572–625, 733–775, and 818–857; these read EEMS…ISRN, RIAS…PSRN, NAND…MESE, and HSIK…AVRI. Residues 467–488 are compositionally biased toward low complexity; sequence SSGAQSSPFSRQSSCRSSAGQQ. Residues 609–623 show a composition bias toward polar residues; the sequence is APRSSSKLNRSSYPS. Residues 753–762 show a composition bias toward acidic residues; sequence ADVESSEDEG. Residues 763 to 772 show a composition bias toward polar residues; that stretch reads NGNNILNTSM.

The protein belongs to the protein kinase superfamily. STE Ser/Thr protein kinase family. MAP kinase kinase kinase subfamily. Mg(2+) is required as a cofactor. Post-translationally, ubiquitinated by rpm-1. Negatively regulated by ubiquitination by fsn-1 bound rpm-1, followed by degradation.

The protein resides in the synapse. The catalysed reaction is L-seryl-[protein] + ATP = O-phospho-L-seryl-[protein] + ADP + H(+). It carries out the reaction L-threonyl-[protein] + ATP = O-phospho-L-threonyl-[protein] + ADP + H(+). Functionally, component of a MAP kinase pathway that functions presynaptically to regulate synaptic architecture and presynaptic differentiation. Phosphorylates and activates mkk-4. In Caenorhabditis briggsae, this protein is Mitogen-activated protein kinase kinase kinase dlk-1.